A 165-amino-acid chain; its full sequence is Small ribosomal subunit protein uS5 (165 aa).

In terms of domain architecture, S5 DRBM spans 10-73 (LKEKVVFINR…EDAKKNLVEV (64 aa)).

This sequence belongs to the universal ribosomal protein uS5 family. In terms of assembly, part of the 30S ribosomal subunit. Contacts proteins S4 and S8.

Its function is as follows. With S4 and S12 plays an important role in translational accuracy. Located at the back of the 30S subunit body where it stabilizes the conformation of the head with respect to the body. The chain is Small ribosomal subunit protein uS5 from Clostridium acetobutylicum (strain ATCC 824 / DSM 792 / JCM 1419 / IAM 19013 / LMG 5710 / NBRC 13948 / NRRL B-527 / VKM B-1787 / 2291 / W).